We begin with the raw amino-acid sequence, 606 residues long: Atypical protein kinase C (606 aa).

One can recognise a PB1 domain in the interval 30 to 113 (SITVKTAYNG…SQLVIHVFPN (84 aa)). The Phorbol-ester/DAG-type zinc finger occupies 145–195 (GHIFQAKRFNRRAFCAYCQDRIWGLGRQGFKCIQCKLLVHKKCHKLVQKHC). One can recognise a Protein kinase domain in the interval 264-532 (FELIRVIGRG…FMDIVSHPFF (269 aa)). Residues 270–278 (IGRGSYAKV) and K293 each bind ATP. Residue D388 is the Proton acceptor of the active site. An AGC-kinase C-terminal domain is found at 533–604 (KNMDWELLER…VNPLLMSLED (72 aa)).

This sequence belongs to the protein kinase superfamily. AGC Ser/Thr protein kinase family. PKC subfamily. In terms of assembly, interacts with baz; the interaction is required for apical localization of aPKC in neuroblasts and epithelial cells. Interacts with Dap160; the interaction promotes aPKC apical localization and kinase activity. Interacts with and phosphorylates l(2)gl and yrt. Interacts with crb and ref(2)P. Forms a complex with baz, fz and Patj. In terms of tissue distribution, expressed in the testis. In spermatid cysts, localizes near the tips of spermatid flagellar axonemes (at protein level). Detectable in freshly laid eggs before onset of zygotic transcription so is deposited in the egg during oogenesis. At the cellular blastoderm stage, present in all cells except the pole cells. During gastrulation, strongly expressed in tissues undergoing morphogenetic movements such as invaginating mesoderm, proctodeum and cephalic furrow. Strongly expressed in neuroblasts.

Its subcellular location is the cytoplasm. The protein resides in the cell cortex. It is found in the apicolateral cell membrane. It carries out the reaction L-seryl-[protein] + ATP = O-phospho-L-seryl-[protein] + ADP + H(+). It catalyses the reaction L-threonyl-[protein] + ATP = O-phospho-L-threonyl-[protein] + ADP + H(+). Functionally, serine/threonine protein kinase which is required for apico-basal cell polarity in the germ line as well as in epithelial and neural precursor cells, for epithelial planar cell polarity and for cell proliferation. During oocyte development, required for the posterior translocation of oocyte specification factors and for the posterior establishment of the microtubule organizing center within the presumptive oocyte. Phosphorylates l(2)gl which restricts l(2)gl activity to the oocyte posterior and regulates posterior enrichment of par-1, leading to establishment of correct oocyte polarity. Essential for apical localization of l(2)gl and par-6 in neuroblasts and for exclusion of mira from the apical cortex. Phosphorylates baz which is required for targeting of baz to the postsynaptic region where it is involved in actin organization, and for apical exclusion of baz which is necessary for establishment of the apical/lateral border in epithelial cells. Phosphorylates yrt which prevents its premature apical localization and is necessary for correct epithelial cell polarization. Required for the establishment of mitotic spindle orientation during symmetric division of epithelial cells and for apical exclusion of raps/Pins. Involved in symmetric adherens junction positioning during embryogenesis. Required for polarization of the spermatid cyst which is necessary for sperm differentiation. Required for stimulation of the Toll signaling pathway which activates Dif and dl and plays a role in innate immunity. Plays a role in memory enhancement. The polypeptide is Atypical protein kinase C (Drosophila melanogaster (Fruit fly)).